Consider the following 310-residue polypeptide: E3 ubiquitin-protein ligase AIP2 (310 aa).

Residues 230–271 (CCICKENLVIGDKMQELPCKHTFHPPCLKPWLDEHNSCPICR) form an RING-type; atypical zinc finger. Residues 276-306 (TDDQKYENWKEREKEAEEERKGAENAVRGGE) adopt a coiled-coil conformation. A compositionally biased stretch (basic and acidic residues) spans 285-298 (KEREKEAEEERKGA). Positions 285–310 (KEREKEAEEERKGAENAVRGGEYMYV) are disordered.

Interacts with ABI3 (via C-terminus). In terms of processing, auto-ubiquitinated. As to expression, highly expressed in leaves and at lower levels in flowers and seeds.

It is found in the nucleus. It localises to the cytoplasm. It carries out the reaction S-ubiquitinyl-[E2 ubiquitin-conjugating enzyme]-L-cysteine + [acceptor protein]-L-lysine = [E2 ubiquitin-conjugating enzyme]-L-cysteine + N(6)-ubiquitinyl-[acceptor protein]-L-lysine.. It functions in the pathway protein modification; protein ubiquitination. In terms of biological role, E3 ubiquitin-protein ligase that acts as a negative regulator of abscisic acid (ABA) signaling. Mediates ubiquitination and subsequent proteasomal degradation of the transcription factor ABI3. The chain is E3 ubiquitin-protein ligase AIP2 (AIP2) from Arabidopsis thaliana (Mouse-ear cress).